The sequence spans 274 residues: Large ribosomal subunit protein uL2 (274 aa).

Disordered stretches follow at residues 28-54 and 224-274; these read APHA…TRHI and VAMN…RRRK. Residues 263–274 show a composition bias toward basic and acidic residues; it reads KRTDKMIVRRRK.

This sequence belongs to the universal ribosomal protein uL2 family. Part of the 50S ribosomal subunit. Forms a bridge to the 30S subunit in the 70S ribosome.

Functionally, one of the primary rRNA binding proteins. Required for association of the 30S and 50S subunits to form the 70S ribosome, for tRNA binding and peptide bond formation. It has been suggested to have peptidyltransferase activity; this is somewhat controversial. Makes several contacts with the 16S rRNA in the 70S ribosome. The protein is Large ribosomal subunit protein uL2 of Pseudomonas syringae pv. tomato (strain ATCC BAA-871 / DC3000).